A 691-amino-acid chain; its full sequence is Methionine--tRNA ligase (691 aa).

The 'HIGH' region motif lies at 14-24; sequence PYANGPFHLGH. Zn(2+)-binding residues include C148, C151, C161, and C164. The 'KMSKS' region signature appears at 344–348; it reads KMSKS. K347 provides a ligand contact to ATP. A tRNA-binding domain is found at 585–691; the sequence is DFDRVDLRVA…PGAKPGMRVR (107 aa).

The protein belongs to the class-I aminoacyl-tRNA synthetase family. MetG type 1 subfamily. Homodimer. Zn(2+) serves as cofactor.

The protein resides in the cytoplasm. The enzyme catalyses tRNA(Met) + L-methionine + ATP = L-methionyl-tRNA(Met) + AMP + diphosphate. Is required not only for elongation of protein synthesis but also for the initiation of all mRNA translation through initiator tRNA(fMet) aminoacylation. In Verminephrobacter eiseniae (strain EF01-2), this protein is Methionine--tRNA ligase.